Consider the following 469-residue polypeptide: Phenolic glucoside malonyltransferase 1 (469 aa).

Met-1 carries the N-acetylmethionine modification. Catalysis depends on His-169, which acts as the Proton acceptor. The HXXXD motif signature appears at 169–173 (HAVLD). 291–292 (ST) is a malonyl-CoA binding site. The active-site Proton acceptor is Asp-413. The DFGWG motif motif lies at 413 to 417 (DFGWG).

This sequence belongs to the plant acyltransferase family. Phenolic glucoside malonyltransferase subfamily.

The enzyme catalyses a flavonol 3-O-beta-D-glucoside + malonyl-CoA = a flavonol 3-O-(6-O-malonyl-beta-D-glucoside) + CoA. It catalyses the reaction a flavonol 7-O-beta-D-glucoside + malonyl-CoA = a flavonol 7-O-(6-O-malonyl-beta-D-glucoside) + CoA. Functionally, malonyltransferase acting on xenobiotic glucosides. Has activity toward 2-Naphthol glucoside (2NAG), 1-Naphthol glucoside (1NAG), kaempferol 7-O-glucoside, kaempferol 3-O-glucoside, hydroxycoumarin glucosides, phenol-glucosides and isoflavone glucoside (daidzin), but not toward 4-coumaroyl glucoside, kaempferol 3,7-O-diglucoside, salicylic acid glucoside and phlorizin. In vivo, seems to be involved in the malonylation of 2-Naphthol glucoside while PMAT2 would be involved in the malonylation of 4-methylumbelliferone glucoside or 4-nitrophenyl glucoside. This chain is Phenolic glucoside malonyltransferase 1 (PMAT1), found in Arabidopsis thaliana (Mouse-ear cress).